The chain runs to 234 residues: Phosphoribosylaminoimidazole-succinocarboxamide synthase (234 aa).

The protein belongs to the SAICAR synthetase family.

It catalyses the reaction 5-amino-1-(5-phospho-D-ribosyl)imidazole-4-carboxylate + L-aspartate + ATP = (2S)-2-[5-amino-1-(5-phospho-beta-D-ribosyl)imidazole-4-carboxamido]succinate + ADP + phosphate + 2 H(+). It participates in purine metabolism; IMP biosynthesis via de novo pathway; 5-amino-1-(5-phospho-D-ribosyl)imidazole-4-carboxamide from 5-amino-1-(5-phospho-D-ribosyl)imidazole-4-carboxylate: step 1/2. This Clostridium botulinum (strain Loch Maree / Type A3) protein is Phosphoribosylaminoimidazole-succinocarboxamide synthase.